Consider the following 368-residue polypeptide: MGGKVYAMDGLKIELKTNICLVEKCLRLVSYSNHSLYWNDPTEDCVWNCLARISRFHYPTLSLVSKGFRSLIASPELEATRSFIGETENHLCVCLNLNKNNNYNPRWFTLSPIAKQKLKSIPWHRHQYPKSSTVVANGSDIYIVGGFVCGTSSKRVFVFDSRSHQWRRLHDMRLPRVSAVVNIVDKKIYVIGGYKPRNIKDCGEVYDPNTQTWEPLLPTTVNLTIQNCVVSGGLVMGGKRYTTNGTKMNTCFVELENLLLGLSETYRDLVWRELKEDVWRVVRGLEQLSHNQNFTYVGNSGGGRRVAIWWKSMVVFRPRGRSHSTKKCKTEIWCAEISVERRGLGELWGRFSFSFRDSFIYIFLWEFF.

Positions 35 to 84 (SLYWNDPTEDCVWNCLARISRFHYPTLSLVSKGFRSLIASPELEATRSFI) constitute an F-box domain. 2 Kelch repeats span residues 140-186 (DIYI…IVDK) and 187-233 (KIYV…VSGG).

The protein is Putative F-box/kelch-repeat protein At5g02995 of Arabidopsis thaliana (Mouse-ear cress).